The following is a 460-amino-acid chain: Decaprenylphosphoryl-beta-D-ribose oxidase (460 aa).

The 175-residue stretch at 19-193 (TAPTVASVLS…LRATIEMTPT (175 aa)) folds into the FAD-binding PCMH-type domain. FAD-binding positions include 52 to 62 (ARGLGRSYGDN), Gly116, 121 to 124 (TVGG), 128 to 131 (CDIH), Ile183, and Tyr414.

It belongs to the DprE1 family. In terms of assembly, monomer. Interacts with DprE2 to form an epimerase complex.

It is found in the periplasm. The catalysed reaction is trans,octa-cis-decaprenylphospho-beta-D-ribofuranose + FAD + H(+) = trans,octa-cis-decaprenylphospho-beta-D-erythro-pentofuranosid-2-ulose + FADH2. It participates in cell wall biogenesis; cell wall polysaccharide biosynthesis. Is inhibited by 8-nitro-benzothiazinones (BTZs) such as BTZ043; BTZs are a new class of antimycobacterial agents that block formation of both cell-wall lipoarabinomannan and arabinogalactan via inhibition of decaprenyl-phospho-arabinose (DPA) synthesis. BTZs are suicide inhibitors that act via covalent modification of DprE1; the essential nitro group of these compounds is reduced by DprE1 to a nitroso group, which then specifically reacts with Cys-386 of DprE1 to form an irreversible semimercaptal adduct. Other compounds with diverse scaffolds (dinitrobenzamides and nitrobenzoquinoxalines) also act as covalent DprE1 inhibitors. Component of the DprE1-DprE2 complex that catalyzes the 2-step epimerization of decaprenyl-phospho-ribose (DPR) to decaprenyl-phospho-arabinose (DPA), a key precursor that serves as the arabinose donor required for the synthesis of cell-wall arabinans. DprE1 catalyzes the first step of epimerization, namely FAD-dependent oxidation of the C2' hydroxyl of DPR to yield the keto intermediate decaprenyl-phospho-2'-keto-D-arabinose (DPX). The intermediate DPX is then transferred to DprE2 subunit of the epimerase complex, most probably through a 'substrate channel' at the interface of DprE1-DprE2 complex. Can also use farnesyl-phosphoryl-beta-D-ribofuranose (FPR) as substrate in vitro. Appears to be essential for the growth of M.smegmatis. In Mycolicibacterium smegmatis (strain ATCC 700084 / mc(2)155) (Mycobacterium smegmatis), this protein is Decaprenylphosphoryl-beta-D-ribose oxidase.